The following is a 214-amino-acid chain: Probable nicotinate-nucleotide adenylyltransferase (214 aa).

The protein belongs to the NadD family.

It catalyses the reaction nicotinate beta-D-ribonucleotide + ATP + H(+) = deamido-NAD(+) + diphosphate. Its pathway is cofactor biosynthesis; NAD(+) biosynthesis; deamido-NAD(+) from nicotinate D-ribonucleotide: step 1/1. Catalyzes the reversible adenylation of nicotinate mononucleotide (NaMN) to nicotinic acid adenine dinucleotide (NaAD). The sequence is that of Probable nicotinate-nucleotide adenylyltransferase from Aeromonas hydrophila subsp. hydrophila (strain ATCC 7966 / DSM 30187 / BCRC 13018 / CCUG 14551 / JCM 1027 / KCTC 2358 / NCIMB 9240 / NCTC 8049).